The primary structure comprises 2477 residues: Spectrin alpha chain, non-erythrocytic 1 (2477 aa).

The N-terminal domain stretch occupies residues 1–14 (MDPSGVKVLETAED). Spectrin repeat units lie at residues 45–146 (RFQF…VKLL), 150–251 (KLVQ…QGKL), 256–358 (EVQR…ARLN), 361–465 (YRLQ…QYEQ), 468–570 (DLQL…AQLA), 574–676 (HLQQ…KLRE), 679–781 (QQQQ…QKLA), 785–888 (RLQQ…DLED), 891–969 (QAQQ…ETGK), and 1096–1162 (LFRE…SEGL). An SH3 domain is found at 967–1026 (TGKELVLALYDYQEKSPREVTMKKGDILTLLNSTNKDWWKVEVNDRQGFVPAAYVKKLDP). Position 1176 is a phosphotyrosine (Tyr1176). Spectrin repeat units lie at residues 1234–1336 (EVQR…EKLG), 1339–1442 (HDLQ…MMLD), 1446–1549 (ELQL…KLGE), 1552–1661 (TLQQ…KLKE), 1664–1767 (KQQN…KLNE), 1769–1873 (HRLH…RLEE), 1876–1979 (EYQQ…KLDE), 1983–2086 (FLQF…KLLE), 2097–2199 (LFLT…LELQ), and 2211–2315 (LRQE…NLEQ). A C-terminal domain region spans residues 2257 to 2477 (HQEIRAMRSQ…IEFTRSLFVN (221 aa)). 3 consecutive EF-hand domains span residues 2328–2363 (EALK…LGYD), 2371–2406 (EPDP…RETE), and 2409–2444 (KSSE…EQAD). Residues Asp2341, Asp2343, Ser2345, Arg2347, Glu2352, Asp2384, Asn2386, Asp2388, His2390, and Glu2395 each coordinate Ca(2+).

It belongs to the spectrin family. Like erythrocyte spectrin, the spectrin-like proteins are capable of forming dimers which can further associate to tetramers. Interacts with ACP1. Post-translationally, phosphorylation of Tyr-1176 decreases sensitivity to cleavage by calpain in vitro.

Its subcellular location is the cytoplasm. The protein localises to the cytoskeleton. It localises to the cell cortex. Its function is as follows. Morphologically, spectrin-like proteins appear to be related to spectrin, showing a flexible rod-like structure. They can bind actin but seem to differ in their calmodulin-binding activity. In nonerythroid tissues, spectrins, in association with some other proteins, may play an important role in membrane organization. This Gallus gallus (Chicken) protein is Spectrin alpha chain, non-erythrocytic 1 (SPTAN1).